Here is a 317-residue protein sequence, read N- to C-terminus: uncharacterized protein (317 aa).

Residues 1 to 11 (MASAGAERRPG) show a composition bias toward basic and acidic residues. Residues 1 to 164 (MASAGAERRP…KAKKRKSLGA (164 aa)) form a disordered region. The span at 19-34 (GQGQLTEEPGSAQTSE) shows a compositional bias: polar residues. Composition is skewed to basic and acidic residues over residues 47–58 (HEARGTQSEDQR) and 71–92 (EGPKLGEERPKPHAGALEERGP). Composition is skewed to basic residues over residues 100–110 (RPRHGPKRKPV) and 151–161 (KQHKKAKKRKS).

This is an uncharacterized protein from Homo sapiens (Human).